We begin with the raw amino-acid sequence, 357 residues long: MSDKTPRKPTAFRLEQPARVSAASEQEEPRRPRAVKDLEQITPQADVFDLTDDEAAELEILDPAFEAPERKGWSLSRILFGALGILVSFAIGIWTEDLIRALFARADWLGWTALGVAMVALAAFAAIILRELVALRRLASVQHLRKDAADAAERDDMAAARKAVDALRTIAAGIPETAKGRQLLDSLTDDIIDGRDLIRLAETEILRPLDREARTLVLNASKRVSIVTAISPRALVDIGYVIFESARLIRRLSQLYGGRPGTFGFIKLARRVIAHLAVTGTIAMGDSVIQQLVGHGLASRLSAKLGEGVVNGLMTARIGIAAMDVVRPFPFNAEKRPGIGDFIGDLARLNSDRNARK.

Residues 1 to 36 are disordered; it reads MSDKTPRKPTAFRLEQPARVSAASEQEEPRRPRAVK. Residues 27 to 36 show a composition bias toward basic and acidic residues; the sequence is EEPRRPRAVK. The next 2 helical transmembrane spans lie at 78–98 and 109–129; these read ILFG…TEDL and LGWT…AIIL.

The protein belongs to the UPF0283 family.

The protein localises to the cell inner membrane. The sequence is that of UPF0283 membrane protein BCAN_A1047 from Brucella canis (strain ATCC 23365 / NCTC 10854 / RM-666).